A 268-amino-acid chain; its full sequence is Tryptophan synthase alpha chain (268 aa).

Catalysis depends on proton acceptor residues glutamate 49 and aspartate 60.

This sequence belongs to the TrpA family. As to quaternary structure, tetramer of two alpha and two beta chains.

The enzyme catalyses (1S,2R)-1-C-(indol-3-yl)glycerol 3-phosphate + L-serine = D-glyceraldehyde 3-phosphate + L-tryptophan + H2O. The protein operates within amino-acid biosynthesis; L-tryptophan biosynthesis; L-tryptophan from chorismate: step 5/5. The alpha subunit is responsible for the aldol cleavage of indoleglycerol phosphate to indole and glyceraldehyde 3-phosphate. The polypeptide is Tryptophan synthase alpha chain (Salmonella choleraesuis (strain SC-B67)).